Reading from the N-terminus, the 429-residue chain is Ribosomal RNA small subunit methyltransferase B (429 aa).

S-adenosyl-L-methionine contacts are provided by residues Cys-254–Lys-260, Asp-277, Asp-303, and Asp-322. The Nucleophile role is filled by Cys-375.

This sequence belongs to the class I-like SAM-binding methyltransferase superfamily. RsmB/NOP family.

The protein resides in the cytoplasm. It catalyses the reaction cytidine(967) in 16S rRNA + S-adenosyl-L-methionine = 5-methylcytidine(967) in 16S rRNA + S-adenosyl-L-homocysteine + H(+). In terms of biological role, specifically methylates the cytosine at position 967 (m5C967) of 16S rRNA. The chain is Ribosomal RNA small subunit methyltransferase B from Escherichia coli (strain UTI89 / UPEC).